Here is a 362-residue protein sequence, read N- to C-terminus: Biotin synthase (362 aa).

In terms of domain architecture, Radical SAM core spans 70 to 305 (CCGNVVDLCS…QQIIRYAGGR (236 aa)). [4Fe-4S] cluster is bound by residues cysteine 88, cysteine 92, and cysteine 95. [2Fe-2S] cluster contacts are provided by cysteine 133, cysteine 170, cysteine 230, and arginine 300.

Belongs to the radical SAM superfamily. Biotin synthase family. In terms of assembly, homodimer. It depends on [4Fe-4S] cluster as a cofactor. The cofactor is [2Fe-2S] cluster.

It catalyses the reaction (4R,5S)-dethiobiotin + (sulfur carrier)-SH + 2 reduced [2Fe-2S]-[ferredoxin] + 2 S-adenosyl-L-methionine = (sulfur carrier)-H + biotin + 2 5'-deoxyadenosine + 2 L-methionine + 2 oxidized [2Fe-2S]-[ferredoxin]. Its pathway is cofactor biosynthesis; biotin biosynthesis; biotin from 7,8-diaminononanoate: step 2/2. In terms of biological role, catalyzes the conversion of dethiobiotin (DTB) to biotin by the insertion of a sulfur atom into dethiobiotin via a radical-based mechanism. In Synechocystis sp. (strain ATCC 27184 / PCC 6803 / Kazusa), this protein is Biotin synthase.